A 38-amino-acid chain; its full sequence is Toxin Bcg III 31.16 (38 aa).

Intrachain disulfides connect Cys-4–Cys-37, Cys-6–Cys-30, and Cys-20–Cys-38.

This sequence belongs to the sea anemone type 3 (BDS) potassium channel toxin family.

The protein localises to the secreted. The protein resides in the nematocyst. Possible modulator of crustacean voltage-gated sodium channels (Nav). The polypeptide is Toxin Bcg III 31.16 (Bunodosoma cangicum (Sea anemone)).